Here is a 347-residue protein sequence, read N- to C-terminus: Protein pelota homolog (347 aa).

Belongs to the eukaryotic release factor 1 family. Pelota subfamily. In terms of assembly, monomer. A divalent metal cation serves as cofactor.

It localises to the cytoplasm. May function in recognizing stalled ribosomes, interact with stem-loop structures in stalled mRNA molecules, and effect endonucleolytic cleavage of the mRNA. May play a role in the release non-functional ribosomes and degradation of damaged mRNAs. Has endoribonuclease activity. The polypeptide is Protein pelota homolog (Methanococcoides burtonii (strain DSM 6242 / NBRC 107633 / OCM 468 / ACE-M)).